The chain runs to 743 residues: MSLPSASNHAHAASPVYSNSNNNKSSASSKKTSSKNDLLRCAVGLLLKQKNYVSNERFRRSDFLLLQNKQQFAVNKMLDTDLHGGNSFTFSNVQVITNNQHTVDQQFGRFSQFVEAQAEPLRLEMKRFYGPMLCHFYLDLLKAREPRGAVELLRKYAHLVAPVDMYDAPPPTKINGCSTTANESTFNIRFAKEAQDTGDTELDYFMRLVQTLSGYTRLEAAESDDTVAHFRSSKYELHTTAVVVNRICAYLQRRGHVLIMNLLYTWLHVHIVENEQRAFSEDHLLGLTDDLEGEDGEDDVVSKPAVTLNTRGDIRPSKSLTEKSNRKRPAEEPNIMLETDIKQEVETDESAELSKLQLNIDACLDTLKSATEQILKSQVELPRFLRISERSRGLTSAHLDPSECHMLAGFDNSAVQLWQLNQSYCRGKSFYRRYPQKRCPWELNNCANQEEETDEDSSDEDVKCSEEERRERNRARHCKYADNSYNEYGGFQLRGHTKGVTDVRFSAHYPLMYSVSKDATMRCWRAHNLHCAAIYRSHNYPIWCLDESPVGQYVVTGSKDLSARLWSLEKEHALIIYAGHTQDVECVAFHPNGNYIATGSADHSVRLWCATSGKLMRVFADCRQAVTQLAFSPDGKMLAAAGEETKVRIFDLAAGAQLAELKDHSASISSLSWSTHNRHLATACSDGTLRLWDIKKLSPMSDNSSAGSSSSATTNRVLTVNSSCQRLVDVFYGTSKTLYCIGT.

6 WD repeats span residues 389-428 (ERSRGLTSAHLDPSECHMLAGFDNSAVQLWQLNQSYCRGK), 493-524 (LRGHTKGVTDVRFSAHYPLMYSVSKDATMRCW), 535-576 (YRSH…ALII), 577-618 (YAGH…LMRV), 619-660 (FADC…QLAE), and 661-702 (LKDH…PMSD).

It belongs to the WD repeat TAF5 family. In terms of assembly, component of the Spt-Ada-Gcn5 acetyltransferase (SAGA) complex consisting of wda/Taf5L, Saf6, Taf9, Taf10b, Taf12, Ada1, Spt3, Spt7, Spt20, Sf3b3, Sf3b5, Nipped-A/Tra1, a histone acetyltransferase (HAT) module made up of Gcn5, Ada2b (Isoform B), Ada3 and Sgf29, and a deubiquitinase (DUB) module made up of not/nonstop, Sgf11 and e(y)2 tethered to SAGA by Atxn7. Not essential for the assembly or integrity of the SAGA complex. Not a component of the Ada2a-containing ATAC complex.

It is found in the nucleus. Its subcellular location is the chromosome. In terms of biological role, component of the transcription regulatory complex SAGA, a multiprotein complex that activates transcription by remodeling chromatin and mediating histone acetylation and deubiquitination. The SAGA complex predominantly acetylates histone H3. Involved in acetylation of histone H3 on 'Lys-10' (H3K9ac) by the SAGA complex in the larval central nervous system. Involved in SAGA complex coactivator functions. Required for oogenesis. The sequence is that of Protein will decrease acetylation from Drosophila melanogaster (Fruit fly).